The sequence spans 514 residues: Proline--tRNA ligase (514 aa).

Belongs to the class-II aminoacyl-tRNA synthetase family. ProS type 3 subfamily. As to quaternary structure, homodimer.

Its subcellular location is the cytoplasm. It catalyses the reaction tRNA(Pro) + L-proline + ATP = L-prolyl-tRNA(Pro) + AMP + diphosphate. Functionally, catalyzes the attachment of proline to tRNA(Pro) in a two-step reaction: proline is first activated by ATP to form Pro-AMP and then transferred to the acceptor end of tRNA(Pro). In Erythrobacter litoralis (strain HTCC2594), this protein is Proline--tRNA ligase.